Reading from the N-terminus, the 245-residue chain is Flavin-dependent thymidylate synthase (245 aa).

In terms of domain architecture, ThyX spans 5–210 (IKVRLVNYTK…ELRPIIRWAK (206 aa)). Residues S59, 83 to 85 (RHR), and Q91 each bind FAD. DUMP contacts are provided by residues 80-83 (QLVR), 91-95 (QQSMR), and R149. Residues 83–93 (RHRIASYTQQS) carry the ThyX motif motif. Residues 165–167 (NLR) and H171 contribute to the FAD site. R176 is a dUMP binding site. Catalysis depends on R176, which acts as the Involved in ionization of N3 of dUMP, leading to its activation.

It belongs to the thymidylate synthase ThyX family. In terms of assembly, homotetramer. It depends on FAD as a cofactor.

It carries out the reaction dUMP + (6R)-5,10-methylene-5,6,7,8-tetrahydrofolate + NADPH + H(+) = dTMP + (6S)-5,6,7,8-tetrahydrofolate + NADP(+). Its pathway is pyrimidine metabolism; dTTP biosynthesis. Its function is as follows. Catalyzes the reductive methylation of 2'-deoxyuridine-5'-monophosphate (dUMP) to 2'-deoxythymidine-5'-monophosphate (dTMP) while utilizing 5,10-methylenetetrahydrofolate (mTHF) as the methyl donor, and NADPH and FADH(2) as the reductant. The chain is Flavin-dependent thymidylate synthase from Thermococcus onnurineus (strain NA1).